A 130-amino-acid polypeptide reads, in one-letter code: Small ribosomal subunit protein uS8 (130 aa).

It belongs to the universal ribosomal protein uS8 family.

This chain is Small ribosomal subunit protein uS8 (RPS15A), found in Strongylocentrotus purpuratus (Purple sea urchin).